A 53-amino-acid polypeptide reads, in one-letter code: Rubredoxin 3 (53 aa).

One can recognise a Rubredoxin-like domain in the interval M1–S53. The Fe cation site is built by C6, C9, C39, and C42.

The protein belongs to the rubredoxin family. In terms of assembly, monomer. The cofactor is Fe(3+).

Its function is as follows. Functions as an electron acceptor for pyruvate ferredoxin oxidoreductase (PFOR). This chain is Rubredoxin 3 (rub3), found in Chlorobaculum tepidum (strain ATCC 49652 / DSM 12025 / NBRC 103806 / TLS) (Chlorobium tepidum).